The chain runs to 259 residues: Hydroxyethylthiazole kinase (259 aa).

Methionine 37 contributes to the substrate binding site. ATP is bound by residues arginine 113 and threonine 158. Residue glycine 185 participates in substrate binding.

Belongs to the Thz kinase family. The cofactor is Mg(2+).

It carries out the reaction 5-(2-hydroxyethyl)-4-methylthiazole + ATP = 4-methyl-5-(2-phosphooxyethyl)-thiazole + ADP + H(+). It functions in the pathway cofactor biosynthesis; thiamine diphosphate biosynthesis; 4-methyl-5-(2-phosphoethyl)-thiazole from 5-(2-hydroxyethyl)-4-methylthiazole: step 1/1. Its function is as follows. Catalyzes the phosphorylation of the hydroxyl group of 4-methyl-5-beta-hydroxyethylthiazole (THZ). This chain is Hydroxyethylthiazole kinase, found in Helicobacter pylori (strain Shi470).